A 260-amino-acid polypeptide reads, in one-letter code: 1-(5-phosphoribosyl)-5-[(5-phosphoribosylamino)methylideneamino] imidazole-4-carboxamide isomerase (260 aa).

The active-site Proton acceptor is Asp-8. Asp-130 (proton donor) is an active-site residue.

It belongs to the HisA/HisF family.

The protein resides in the cytoplasm. The catalysed reaction is 1-(5-phospho-beta-D-ribosyl)-5-[(5-phospho-beta-D-ribosylamino)methylideneamino]imidazole-4-carboxamide = 5-[(5-phospho-1-deoxy-D-ribulos-1-ylimino)methylamino]-1-(5-phospho-beta-D-ribosyl)imidazole-4-carboxamide. The protein operates within amino-acid biosynthesis; L-histidine biosynthesis; L-histidine from 5-phospho-alpha-D-ribose 1-diphosphate: step 4/9. This chain is 1-(5-phosphoribosyl)-5-[(5-phosphoribosylamino)methylideneamino] imidazole-4-carboxamide isomerase, found in Chlorobaculum parvum (strain DSM 263 / NCIMB 8327) (Chlorobium vibrioforme subsp. thiosulfatophilum).